Consider the following 298-residue polypeptide: Ribosomal RNA small subunit methyltransferase H (298 aa).

S-adenosyl-L-methionine is bound by residues 35-37, Asp-55, Phe-82, Asp-100, and Gln-107; that span reads GGH.

It belongs to the methyltransferase superfamily. RsmH family.

Its subcellular location is the cytoplasm. The enzyme catalyses cytidine(1402) in 16S rRNA + S-adenosyl-L-methionine = N(4)-methylcytidine(1402) in 16S rRNA + S-adenosyl-L-homocysteine + H(+). Specifically methylates the N4 position of cytidine in position 1402 (C1402) of 16S rRNA. In Chlamydia felis (strain Fe/C-56) (Chlamydophila felis), this protein is Ribosomal RNA small subunit methyltransferase H.